A 1021-amino-acid polypeptide reads, in one-letter code: tRNA wybutosine-synthesizing protein 4 (1021 aa).

S-adenosyl-L-methionine is bound by residues R68, D122, 171-172 (DL), and E198. A JmjC domain is found at 826–980 (PTEAPANLAE…STGRDVYGNR (155 aa)).

It belongs to the methyltransferase superfamily. LCMT family.

The enzyme catalyses 7-[(3S)-3-amino-3-carboxypropyl]wyosine(37) in tRNA(Phe) + S-adenosyl-L-methionine = 7-[(3S)-(3-amino-3-methoxycarbonyl)propyl]wyosine(37) in tRNA(Phe) + S-adenosyl-L-homocysteine. It catalyses the reaction 7-[(3S)-(3-amino-3-methoxycarbonyl)propyl]wyosine(37) in tRNA(Phe) + S-adenosyl-L-methionine + CO2 = wybutosine(37) in tRNA(Phe) + S-adenosyl-L-homocysteine + 2 H(+). It functions in the pathway tRNA modification; wybutosine-tRNA(Phe) biosynthesis. Probable S-adenosyl-L-methionine-dependent methyltransferase that acts as a component of the wybutosine biosynthesis pathway. Wybutosine is a hyper modified guanosine with a tricyclic base found at the 3'-position adjacent to the anticodon of eukaryotic phenylalanine tRNA. May methylate the carboxyl group of leucine residues to form alpha-leucine ester residues. The sequence is that of tRNA wybutosine-synthesizing protein 4 (PPM2) from Gibberella zeae (strain ATCC MYA-4620 / CBS 123657 / FGSC 9075 / NRRL 31084 / PH-1) (Wheat head blight fungus).